The chain runs to 156 residues: uncharacterized protein (156 aa).

Residue H55 is part of the active site.

The protein belongs to the thioester dehydratase family. FabZ subfamily.

This is an uncharacterized protein from Halalkalibacterium halodurans (strain ATCC BAA-125 / DSM 18197 / FERM 7344 / JCM 9153 / C-125) (Bacillus halodurans).